A 475-amino-acid polypeptide reads, in one-letter code: Aspartyl/glutamyl-tRNA(Asn/Gln) amidotransferase subunit B (475 aa).

It belongs to the GatB/GatE family. GatB subfamily. Heterotrimer of A, B and C subunits.

The catalysed reaction is L-glutamyl-tRNA(Gln) + L-glutamine + ATP + H2O = L-glutaminyl-tRNA(Gln) + L-glutamate + ADP + phosphate + H(+). It carries out the reaction L-aspartyl-tRNA(Asn) + L-glutamine + ATP + H2O = L-asparaginyl-tRNA(Asn) + L-glutamate + ADP + phosphate + 2 H(+). Functionally, allows the formation of correctly charged Asn-tRNA(Asn) or Gln-tRNA(Gln) through the transamidation of misacylated Asp-tRNA(Asn) or Glu-tRNA(Gln) in organisms which lack either or both of asparaginyl-tRNA or glutaminyl-tRNA synthetases. The reaction takes place in the presence of glutamine and ATP through an activated phospho-Asp-tRNA(Asn) or phospho-Glu-tRNA(Gln). The polypeptide is Aspartyl/glutamyl-tRNA(Asn/Gln) amidotransferase subunit B (Agathobacter rectalis (strain ATCC 33656 / DSM 3377 / JCM 17463 / KCTC 5835 / VPI 0990) (Eubacterium rectale)).